We begin with the raw amino-acid sequence, 255 residues long: DNA repair protein RecO (255 aa).

It belongs to the RecO family.

In terms of biological role, involved in DNA repair and RecF pathway recombination. The protein is DNA repair protein RecO of Bacillus velezensis (strain DSM 23117 / BGSC 10A6 / LMG 26770 / FZB42) (Bacillus amyloliquefaciens subsp. plantarum).